The following is a 202-amino-acid chain: UPF0637 protein Exig_2520 (202 aa).

The protein belongs to the UPF0637 family.

The chain is UPF0637 protein Exig_2520 from Exiguobacterium sibiricum (strain DSM 17290 / CCUG 55495 / CIP 109462 / JCM 13490 / 255-15).